Consider the following 373-residue polypeptide: 5-amino-6-(5-phospho-D-ribitylamino)uracil phosphatase, chloroplastic (373 aa).

Belongs to the HAD-like hydrolase superfamily. DOG/GPP family. As to quaternary structure, homodimer. It depends on Mg(2+) as a cofactor.

Its subcellular location is the plastid. It localises to the chloroplast. It carries out the reaction 5-amino-6-(5-phospho-D-ribitylamino)uracil + H2O = 5-amino-6-(D-ribitylamino)uracil + phosphate. In terms of biological role, catalyzes the dephosphorylation of 5-amino-6-(5-phospho-D-ribitylamino)uracil, also known as ARPP, but has no activity toward flavin mononucleotide (FMN). The protein is 5-amino-6-(5-phospho-D-ribitylamino)uracil phosphatase, chloroplastic of Arabidopsis thaliana (Mouse-ear cress).